A 406-amino-acid polypeptide reads, in one-letter code: Probable UDP-arabinose 4-epimerase 3 (406 aa).

Over 1–26 (MIPLNRRASQTRGGMEYFDARRKPHN) the chain is Cytoplasmic. A helical; Signal-anchor for type II membrane protein membrane pass occupies residues 27 to 44 (VGKVIAALVLTTLCIFIL). Over 45 to 406 (KQSPGFGGSS…KSHPRGYGSN (362 aa)) the chain is Lumenal. Residue 65 to 96 (HVLVTGGAGYIGSHASLRLLKDNYRVTIVDNL) participates in NAD(+) binding. Y213 functions as the Proton acceptor in the catalytic mechanism.

This sequence belongs to the NAD(P)-dependent epimerase/dehydratase family. The cofactor is NAD(+).

The protein localises to the golgi apparatus. It localises to the golgi stack membrane. The catalysed reaction is UDP-beta-L-arabinopyranose = UDP-alpha-D-xylose. The protein operates within nucleotide-sugar biosynthesis; UDP-L-arabinose biosynthesis; UDP-L-arabinose from UDP-alpha-D-xylose: step 1/1. It participates in cell wall biogenesis; cell wall polysaccharide biosynthesis. The chain is Probable UDP-arabinose 4-epimerase 3 (UEL-3) from Oryza sativa subsp. japonica (Rice).